The following is a 1073-amino-acid chain: Probable inorganic carbon transporter subunit DabA (1073 aa).

Residues Cys551, Asp553, His742, and Cys757 each coordinate Zn(2+).

Belongs to the inorganic carbon transporter (TC 9.A.2) DabA family. In terms of assembly, forms a complex with DabB. Zn(2+) serves as cofactor.

The protein localises to the cell inner membrane. Functionally, part of an energy-coupled inorganic carbon pump. The protein is Probable inorganic carbon transporter subunit DabA of Methylococcus capsulatus (strain ATCC 33009 / NCIMB 11132 / Bath).